The chain runs to 87 residues: Small ribosomal subunit protein eS21 (87 aa).

Belongs to the eukaryotic ribosomal protein eS21 family. In terms of assembly, component of the small ribosomal subunit. Mature ribosomes consist of a small (40S) and a large (60S) subunit. The 40S subunit contains about 33 different proteins and 1 molecule of RNA (18S). The 60S subunit contains about 49 different proteins and 3 molecules of RNA (25S, 5.8S and 5S).

It is found in the cytoplasm. Functionally, required for the processing of the 20S rRNA-precursor to mature 18S rRNA in a late step of the maturation of 40S ribosomal subunits. Has a physiological role leading to 18S rRNA stability. The sequence is that of Small ribosomal subunit protein eS21 (RPS21) from Candida albicans (Yeast).